Consider the following 255-residue polypeptide: NAD kinase (255 aa).

Asp44 functions as the Proton acceptor in the catalytic mechanism. Residues 44–45 (DG), His49, 114–115 (NE), Asp144, Ala152, 155–160 (SAYNLS), and Gln216 each bind NAD(+).

This sequence belongs to the NAD kinase family. A divalent metal cation serves as cofactor.

It is found in the cytoplasm. It catalyses the reaction NAD(+) + ATP = ADP + NADP(+) + H(+). Its function is as follows. Involved in the regulation of the intracellular balance of NAD and NADP, and is a key enzyme in the biosynthesis of NADP. Catalyzes specifically the phosphorylation on 2'-hydroxyl of the adenosine moiety of NAD to yield NADP. In Rickettsia bellii (strain OSU 85-389), this protein is NAD kinase.